Consider the following 152-residue polypeptide: Small ribosomal subunit protein uS15 (152 aa).

Belongs to the universal ribosomal protein uS15 family. Part of the 30S ribosomal subunit.

The protein is Small ribosomal subunit protein uS15 of Methanocorpusculum labreanum (strain ATCC 43576 / DSM 4855 / Z).